The sequence spans 232 residues: MFSNAFTDKAVMAELVAKMLWEIKAVHFRADEPYRLASGMASPVYIDCRKLVSYPRIRSAVMDFAAATILREAGFEQFDVVAGGETAGIPFAAMLAERLGLPMIYVRKAPKGHGRNAQIEGYMPEGARVLVIEDLTTAGGSMFKFIDAIRAAGGVVEHGIALFYYDIFPEARGNMKSKGVDLHYIATWRNVLAVARELALFDEKTLNEVEAFLNAPLDWSGRNGGVRALAVQ.

5-phospho-alpha-D-ribose 1-diphosphate is bound by residues Arg107, Lys108, Lys111, His113, and 133–141 (EDLTTAGGS). Thr137 serves as a coordination point for orotate.

Belongs to the purine/pyrimidine phosphoribosyltransferase family. PyrE subfamily. Homodimer. Requires Mg(2+) as cofactor.

The catalysed reaction is orotidine 5'-phosphate + diphosphate = orotate + 5-phospho-alpha-D-ribose 1-diphosphate. It functions in the pathway pyrimidine metabolism; UMP biosynthesis via de novo pathway; UMP from orotate: step 1/2. Its function is as follows. Catalyzes the transfer of a ribosyl phosphate group from 5-phosphoribose 1-diphosphate to orotate, leading to the formation of orotidine monophosphate (OMP). In Rhizobium meliloti (strain 1021) (Ensifer meliloti), this protein is Orotate phosphoribosyltransferase.